The chain runs to 445 residues: NAD-specific glutamate dehydrogenase (445 aa).

The active site involves K124. Residue 235-241 coordinates NAD(+); the sequence is GFGNVAW.

It belongs to the Glu/Leu/Phe/Val dehydrogenases family. In terms of assembly, homohexamer.

The catalysed reaction is L-glutamate + NAD(+) + H2O = 2-oxoglutarate + NH4(+) + NADH + H(+). In Bacteroides fragilis (strain YCH46), this protein is NAD-specific glutamate dehydrogenase (gdhB).